A 189-amino-acid polypeptide reads, in one-letter code: MISTTIFIITSLAAVTYGRSHLTVPVGSTCTLQGPQEGYVTWWRIYDNGGFARPCDQPGTKFSCNGRDLTIINITSNEQGFYYGTNYKNSLDYNIIVVPATTSAPRKSTFSSSSAKASTIPKTASAMLKLPKIALSNSTAAPNTIPKSTIGIITAVVVGLMIIFLCIMYYACCYRKHEQKGDALLNFDI.

Asparagine 73 and asparagine 137 each carry an N-linked (GlcNAc...) asparagine; by host glycan.

Belongs to the adenoviridae E3_20 family.

Functionally, E3 proteins seem to be dispensable for virus growth in tissue culture cells. They are potentially important for virus growth under special conditions; E3 region may help adenoviruses to evade the immune surveillance of the host. The sequence is that of Early E3 20.5 kDa glycoprotein from Human adenovirus B serotype 3 (HAdV-3).